We begin with the raw amino-acid sequence, 238 residues long: Large ribosomal subunit protein uL2 (238 aa).

Residues 199 to 238 form a disordered region; it reads PHGGGLHQSVSRSSTVARNTPPGRKVGHIAARRTGRRDRK. Residues 206-216 show a composition bias toward polar residues; that stretch reads QSVSRSSTVAR. A compositionally biased stretch (basic residues) spans 223–238; that stretch reads KVGHIAARRTGRRDRK.

Belongs to the universal ribosomal protein uL2 family. As to quaternary structure, part of the 50S ribosomal subunit. Forms a bridge to the 30S subunit in the 70S ribosome.

Functionally, one of the primary rRNA binding proteins. Required for association of the 30S and 50S subunits to form the 70S ribosome, for tRNA binding and peptide bond formation. It has been suggested to have peptidyltransferase activity; this is somewhat controversial. Makes several contacts with the 16S rRNA in the 70S ribosome. The protein is Large ribosomal subunit protein uL2 of Metallosphaera sedula (strain ATCC 51363 / DSM 5348 / JCM 9185 / NBRC 15509 / TH2).